Here is a 1091-residue protein sequence, read N- to C-terminus: Sodium/potassium exporting P-type ATPase 5 (1091 aa).

At Met1–Lys63 the chain is on the cytoplasmic side. Residues Ala64 to Ile84 form a helical membrane-spanning segment. At Ser85 to Asp90 the chain is on the extracellular side. The helical transmembrane segment at Trp91–Gln111 threads the bilayer. Over Glu112–Lys282 the chain is Cytoplasmic. Residues Leu283–Ala303 form a helical membrane-spanning segment. Topologically, residues Ser304–Arg312 are extracellular. The chain crosses the membrane as a helical span at residues Val313–Leu333. Residues Thr334 to Phe815 are Cytoplasmic-facing. Asp369 functions as the 4-aspartylphosphate intermediate in the catalytic mechanism. Mg(2+) contacts are provided by Asp369 and Thr371. The ATP site is built by Thr371 and Glu483. A disordered region spans residues Ala499–Gly525. The segment covering Glu503–Gln519 has biased composition (polar residues). ATP is bound by residues Lys561, Arg606, Thr673, Gly674, Asp675, Arg732, and Lys738. Mg(2+) is bound at residue Asp757. Asn760 provides a ligand contact to ATP. A helical membrane pass occupies residues Val816 to Phe836. Over Arg837–Ser848 the chain is Extracellular. Residues Pro849–Leu869 traverse the membrane as a helical segment. The Cytoplasmic segment spans residues Glu870 to Glu885. Residues Val886–Gly906 form a helical membrane-spanning segment. Topologically, residues Ser907–Arg943 are extracellular. Residues Ser944–Met964 form a helical membrane-spanning segment. The Cytoplasmic portion of the chain corresponds to Arg965–Phe991. The helical transmembrane segment at Leu992 to Ile1012 threads the bilayer. Over Asn1013–Pro1021 the chain is Extracellular. The helical transmembrane segment at Ile1022–Leu1042 threads the bilayer. The Cytoplasmic segment spans residues Tyr1043–His1091.

This sequence belongs to the cation transport ATPase (P-type) (TC 3.A.3) family. Type IID subfamily. It depends on Mg(2+) as a cofactor. In terms of processing, the active site is phosphorylated in presence of sodium or potassium and in conditions of higher pH. Not phosphorylated in presence of calcium ions.

The protein localises to the cell membrane. It carries out the reaction Na(+)(in) + ATP + H2O = Na(+)(out) + ADP + phosphate + H(+). The catalysed reaction is K(+)(in) + ATP + H2O = K(+)(out) + ADP + phosphate + H(+). Its function is as follows. Catalyzes the hydrolysis of ATP coupled with the export of sodium and potassium from the cell. May export potassium less efficiently. May transport other cations such as lithium. Sodium/potassium efflux ATPases are involved in salt tolerance and maintaining the membrane potential across the plasma membrane in high salinity (Na+) or alkaline (K+) environments. This chain is Sodium/potassium exporting P-type ATPase 5, found in Saccharomyces cerevisiae (strain ATCC 204508 / S288c) (Baker's yeast).